We begin with the raw amino-acid sequence, 198 residues long: Penicillin-binding protein activator LpoB (198 aa).

Positions 1 to 20 (MSWIRIRRSGVLLLALVLSG) are cleaved as a signal peptide. C21 is lipidated: N-palmitoyl cysteine. A lipid anchor (S-diacylglycerol cysteine) is attached at C21. Residues 28 to 62 (PQPAAPVEPVTPPVNVPQPPKAEPGQNVPPPPKMQ) form a disordered region. Pro residues predominate over residues 30-61 (PAAPVEPVTPPVNVPQPPKAEPGQNVPPPPKM).

The protein belongs to the LpoB family. In terms of assembly, interacts with PBP1b.

It localises to the cell outer membrane. Functionally, regulator of peptidoglycan synthesis that is essential for the function of penicillin-binding protein 1B (PBP1b). The polypeptide is Penicillin-binding protein activator LpoB (Erwinia amylovora (strain CFBP1430)).